Consider the following 562-residue polypeptide: Protein FAM83D-A (562 aa).

Residues 424–471 form a disordered region; that stretch reads ITTQTTETSQCTTQTPAPTSSVARLSNSSNSSSSSFSSTSITSTGSNC. Residues 425–471 are compositionally biased toward low complexity; the sequence is TTQTTETSQCTTQTPAPTSSVARLSNSSNSSSSSFSSTSITSTGSNC.

The protein belongs to the FAM83 family.

It localises to the cytoplasm. The protein localises to the cytoskeleton. Its subcellular location is the spindle. It is found in the spindle pole. In terms of biological role, may regulate cell proliferation, growth, migration and epithelial to mesenchymal transition. May also be important for proper chromosome congression and alignment during mitosis. The chain is Protein FAM83D-A from Xenopus laevis (African clawed frog).